The primary structure comprises 142 residues: Hemoglobin subunit alpha-A (142 aa).

Residues 2–142 (VLSAADKTNV…VGTVLTAKYR (141 aa)) enclose the Globin domain. Residue histidine 59 participates in O2 binding. Histidine 88 lines the heme b pocket.

This sequence belongs to the globin family. In terms of assembly, heterotetramer of two alpha chains and two beta chains. Red blood cells.

Its function is as follows. Involved in oxygen transport from the lung to the various peripheral tissues. This chain is Hemoglobin subunit alpha-A (HBAA), found in Anser anser anser (Western greylag goose).